The following is a 1235-amino-acid chain: DNA polymerase catalytic subunit (1235 aa).

2 disordered regions span residues 640–692 (QGRF…TAGR) and 1098–1134 (ATAPGDEPAPPAALPCPAKRPRETPSHADPPGGASKP). Residues 650-661 (APKRPAAAREDE) are compositionally biased toward basic and acidic residues. The span at 662 to 675 (ERPEEEGEDEDERE) shows a compositional bias: acidic residues. Residues 676-691 (EGGGEREPEGARETAG) show a composition bias toward basic and acidic residues.

The protein belongs to the DNA polymerase type-B family. Forms a complex with the ssDNA-binding protein UL29, the DNA polymerase processivity factor, and the alkaline exonuclease. Interacts with the putative helicase-primase complex subunit UL8; this interaction may coordinate leading and lagging strand DNA synthesis at the replication fork.

It localises to the host nucleus. It carries out the reaction DNA(n) + a 2'-deoxyribonucleoside 5'-triphosphate = DNA(n+1) + diphosphate. The enzyme catalyses Endonucleolytic cleavage to 5'-phosphomonoester.. Replicates viral genomic DNA. The replication complex is composed of six viral proteins: the DNA polymerase, processivity factor, primase, primase-associated factor, helicase, and ssDNA-binding protein. Additionally, the polymerase contains an intrinsic ribonuclease H (RNase H) activity that specifically degrades RNA/DNA heteroduplexes or duplex DNA substrates in the 5' to 3' direction. Therefore, it can catalyze the excision of the RNA primers that initiate the synthesis of Okazaki fragments at a replication fork during viral DNA replication. In Human herpesvirus 1 (strain Angelotti) (HHV-1), this protein is DNA polymerase catalytic subunit.